The sequence spans 183 residues: MIDREGYRPNVGIILCNARNQVFWGKRVNQHAWQFPQGGINAGETPEQAMFRELEEEVGLLPGHVRILGRTREWLRYDVPPHWTRRDNRGLYRGQKQIWFLLRLTGRDCDVSLRASAHPEFDAWRWNEYWVPMEAVVDFKREVYRLALEELERYLHRDLRYLRQHTRRPGERREVPFDLQLKP.

One can recognise a Nudix hydrolase domain in the interval 6–149 (GYRPNVGIIL…KREVYRLALE (144 aa)). The short motif at 38–59 (GGINAGETPEQAMFRELEEEVG) is the Nudix box element.

Belongs to the Nudix hydrolase family. RppH subfamily. A divalent metal cation is required as a cofactor.

In terms of biological role, accelerates the degradation of transcripts by removing pyrophosphate from the 5'-end of triphosphorylated RNA, leading to a more labile monophosphorylated state that can stimulate subsequent ribonuclease cleavage. This Thiobacillus denitrificans (strain ATCC 25259 / T1) protein is RNA pyrophosphohydrolase.